Consider the following 161-residue polypeptide: Crossover junction endodeoxyribonuclease RuvC (161 aa).

Residues aspartate 8, glutamate 67, and aspartate 139 contribute to the active site. Mg(2+)-binding residues include aspartate 8, glutamate 67, and aspartate 139.

Belongs to the RuvC family. Homodimer which binds Holliday junction (HJ) DNA. The HJ becomes 2-fold symmetrical on binding to RuvC with unstacked arms; it has a different conformation from HJ DNA in complex with RuvA. In the full resolvosome a probable DNA-RuvA(4)-RuvB(12)-RuvC(2) complex forms which resolves the HJ. Mg(2+) serves as cofactor.

It localises to the cytoplasm. It catalyses the reaction Endonucleolytic cleavage at a junction such as a reciprocal single-stranded crossover between two homologous DNA duplexes (Holliday junction).. The RuvA-RuvB-RuvC complex processes Holliday junction (HJ) DNA during genetic recombination and DNA repair. Endonuclease that resolves HJ intermediates. Cleaves cruciform DNA by making single-stranded nicks across the HJ at symmetrical positions within the homologous arms, yielding a 5'-phosphate and a 3'-hydroxyl group; requires a central core of homology in the junction. The consensus cleavage sequence is 5'-(A/T)TT(C/G)-3'. Cleavage occurs on the 3'-side of the TT dinucleotide at the point of strand exchange. HJ branch migration catalyzed by RuvA-RuvB allows RuvC to scan DNA until it finds its consensus sequence, where it cleaves and resolves the cruciform DNA. This chain is Crossover junction endodeoxyribonuclease RuvC, found in Wigglesworthia glossinidia brevipalpis.